The following is a 192-amino-acid chain: Protein GrpE (192 aa).

Residues 1-34 are disordered; the sequence is MSSKEQKTPNEQVSEEMENTAEQQVEATQETGEC. Over residues 20-31 the composition is skewed to polar residues; sequence TAEQQVEATQET.

Belongs to the GrpE family. In terms of assembly, homodimer.

Its subcellular location is the cytoplasm. Participates actively in the response to hyperosmotic and heat shock by preventing the aggregation of stress-denatured proteins, in association with DnaK and GrpE. It is the nucleotide exchange factor for DnaK and may function as a thermosensor. Unfolded proteins bind initially to DnaJ; upon interaction with the DnaJ-bound protein, DnaK hydrolyzes its bound ATP, resulting in the formation of a stable complex. GrpE releases ADP from DnaK; ATP binding to DnaK triggers the release of the substrate protein, thus completing the reaction cycle. Several rounds of ATP-dependent interactions between DnaJ, DnaK and GrpE are required for fully efficient folding. This chain is Protein GrpE, found in Yersinia pseudotuberculosis serotype I (strain IP32953).